Here is a 127-residue protein sequence, read N- to C-terminus: Fluoride-specific ion channel FluC (127 aa).

4 helical membrane-spanning segments follow: residues 4–24 (FTLL…RYLI), 35–55 (GFPY…GILM), 71–91 (IIGL…MDNV), and 99–119 (FIKA…ACFI). Glycine 78 and threonine 81 together coordinate Na(+).

It belongs to the fluoride channel Fluc/FEX (TC 1.A.43) family.

It is found in the cell inner membrane. The enzyme catalyses fluoride(in) = fluoride(out). With respect to regulation, na(+) is not transported, but it plays an essential structural role and its presence is essential for fluoride channel function. Fluoride-specific ion channel. Important for reducing fluoride concentration in the cell, thus reducing its toxicity. The sequence is that of Fluoride-specific ion channel FluC from Photobacterium profundum (strain SS9).